Consider the following 34-residue polypeptide: Conotoxin Cl6d (34 aa).

3 disulfides stabilise this stretch: C4–C19, C12–C29, and C18–C33. P14 and P21 each carry 4-hydroxyproline.

Expressed by the venom duct.

The protein localises to the secreted. This chain is Conotoxin Cl6d, found in Californiconus californicus (California cone).